We begin with the raw amino-acid sequence, 890 residues long: Leucine--tRNA ligase (890 aa).

Residues 48–58 (PYPSGKLHMGH) carry the 'HIGH' region motif. Positions 645–649 (KMSKS) match the 'KMSKS' region motif. Lys648 contacts ATP.

This sequence belongs to the class-I aminoacyl-tRNA synthetase family.

It localises to the cytoplasm. The enzyme catalyses tRNA(Leu) + L-leucine + ATP = L-leucyl-tRNA(Leu) + AMP + diphosphate. This is Leucine--tRNA ligase from Polynucleobacter necessarius subsp. necessarius (strain STIR1).